We begin with the raw amino-acid sequence, 550 residues long: Zinc finger protein 382 (550 aa).

The interval 1–105 (MPLQGSVSFK…RHSRPLIFIN (105 aa)) is mediates interaction with TRIM28. 2 represses transcription regions span residues 5–46 (GSVS…FVSV) and 70–211 (IFPS…PEQP). In terms of domain architecture, KRAB spans 7–78 (VSFKDVTVDF…RIFPSYSYLE (72 aa)). Residues 212 to 234 (FDHNECEKSFLMKGMLFTHTRAH) form a C2H2-type 1; degenerate zinc finger. 9 consecutive C2H2-type zinc fingers follow at residues 296–318 (FHCP…QRIH), 324–346 (YVCN…EKTH), 352–374 (FICI…HKTH), 380–402 (YECP…QRTH), 408–430 (YQCN…QRTH), 436–458 (YICN…QRIH), 464–486 (YICN…HRIH), 492–514 (NGCP…QKTH), and 520–542 (YECK…QKTH). Positions 296-550 (FHCPYCGNNF…THKVETTGIQ (255 aa)) are required for transcriptional repression activity; probably mediates sequence-specific DNA-binding.

Belongs to the krueppel C2H2-type zinc-finger protein family. As to quaternary structure, interacts with TRIM28; enhances the transcriptional repressor activity. As to expression, specifically expressed in heart with a weaker expression also detected in skeletal muscle.

The protein localises to the nucleus. Its function is as follows. Functions as a sequence-specific transcriptional repressor. The protein is Zinc finger protein 382 (ZNF382) of Homo sapiens (Human).